Reading from the N-terminus, the 409-residue chain is uncharacterized protein (409 aa).

The next 10 helical transmembrane spans lie at 18 to 38, 47 to 67, 100 to 120, 159 to 179, 180 to 200, 232 to 252, 260 to 280, 302 to 322, 355 to 375, and 380 to 400; these read ALSA…ADVV, GPLL…TGVG, VVTV…ALVI, VGAM…GNAY, APAL…LLWL, FWLY…FGLL, GVLA…ADAL, ILSI…VVIG, GVFA…IGWL, and IGTL…MMFA.

It is found in the cell membrane. This is an uncharacterized protein from Mycobacterium tuberculosis (strain CDC 1551 / Oshkosh).